Reading from the N-terminus, the 665-residue chain is BTB/POZ domain-containing protein At1g30440 (665 aa).

Positions 28–98 constitute a BTB domain; it reads SDIVVEVGEM…CYGVKLELTA (71 aa). One can recognise an NPH3 domain in the interval 214 to 508; sequence DWWYEDASML…VQVLFFEQLQ (295 aa). Positions 260–280 are disordered; that stretch reads LKRRRGGPESSGRFSTPLGSG. Residues 271 to 280 are compositionally biased toward polar residues; the sequence is GRFSTPLGSG. A Phosphoserine modification is found at serine 279. Positions 281 to 306 form a coiled coil; that stretch reads NVLSEEEQKNLLEEIQELLRMQKGLV. Phosphotyrosine is present on tyrosine 449. The segment covering 626-639 has biased composition (polar residues); it reads SAQEGSVSKSNNEN. Positions 626-665 are disordered; that stretch reads SAQEGSVSKSNNENVKIEKLKDVKERRGKHKKASSISSER. Residues 640–650 show a composition bias toward basic and acidic residues; that stretch reads VKIEKLKDVKE.

It belongs to the NPH3 family.

It functions in the pathway protein modification; protein ubiquitination. Functionally, may act as a substrate-specific adapter of an E3 ubiquitin-protein ligase complex (CUL3-RBX1-BTB) which mediates the ubiquitination and subsequent proteasomal degradation of target proteins. In Arabidopsis thaliana (Mouse-ear cress), this protein is BTB/POZ domain-containing protein At1g30440.